The following is a 66-amino-acid chain: Translational regulator CsrA (66 aa).

Belongs to the CsrA/RsmA family. As to quaternary structure, homodimer; the beta-strands of each monomer intercalate to form a hydrophobic core, while the alpha-helices form wings that extend away from the core.

It localises to the cytoplasm. A key translational regulator that binds mRNA to regulate translation initiation and/or mRNA stability. Mediates global changes in gene expression, shifting from rapid growth to stress survival by linking envelope stress, the stringent response and the catabolite repression systems. Usually binds in the 5'-UTR; binding at or near the Shine-Dalgarno sequence prevents ribosome-binding, repressing translation, binding elsewhere in the 5'-UTR can activate translation and/or stabilize the mRNA. Its function is antagonized by small RNA(s). This is Translational regulator CsrA from Alkalilimnicola ehrlichii (strain ATCC BAA-1101 / DSM 17681 / MLHE-1).